We begin with the raw amino-acid sequence, 104 residues long: Large ribosomal subunit protein uL23 (104 aa).

Belongs to the universal ribosomal protein uL23 family. Part of the 50S ribosomal subunit. Contacts protein L29, and trigger factor when it is bound to the ribosome.

One of the early assembly proteins it binds 23S rRNA. One of the proteins that surrounds the polypeptide exit tunnel on the outside of the ribosome. Forms the main docking site for trigger factor binding to the ribosome. The protein is Large ribosomal subunit protein uL23 of Ralstonia nicotianae (strain ATCC BAA-1114 / GMI1000) (Ralstonia solanacearum).